Here is a 348-residue protein sequence, read N- to C-terminus: Dihydroorotase (348 aa).

Residues histidine 17 and histidine 19 each contribute to the Zn(2+) site. Residues 19–21 (HLR) and asparagine 45 each bind substrate. Residues lysine 103, histidine 140, and histidine 178 each contribute to the Zn(2+) site. Position 103 is an N6-carboxylysine (lysine 103). A substrate-binding site is contributed by histidine 140. Leucine 223 lines the substrate pocket. Aspartate 251 is a binding site for Zn(2+). The active site involves aspartate 251. 2 residues coordinate substrate: histidine 255 and alanine 267.

The protein belongs to the metallo-dependent hydrolases superfamily. DHOase family. Class II DHOase subfamily. As to quaternary structure, homodimer. Zn(2+) serves as cofactor.

It catalyses the reaction (S)-dihydroorotate + H2O = N-carbamoyl-L-aspartate + H(+). It functions in the pathway pyrimidine metabolism; UMP biosynthesis via de novo pathway; (S)-dihydroorotate from bicarbonate: step 3/3. Functionally, catalyzes the reversible cyclization of carbamoyl aspartate to dihydroorotate. The polypeptide is Dihydroorotase (Salmonella paratyphi B (strain ATCC BAA-1250 / SPB7)).